A 207-amino-acid chain; its full sequence is Thiamine-phosphate synthase (207 aa).

Residues 35–39 and Asn67 contribute to the 4-amino-2-methyl-5-(diphosphooxymethyl)pyrimidine site; that span reads QYRDK. 2 residues coordinate Mg(2+): Asp68 and Asp86. 4-amino-2-methyl-5-(diphosphooxymethyl)pyrimidine is bound at residue Thr105. 132-134 is a binding site for 2-[(2R,5Z)-2-carboxy-4-methylthiazol-5(2H)-ylidene]ethyl phosphate; it reads SVT. Lys135 is a binding site for 4-amino-2-methyl-5-(diphosphooxymethyl)pyrimidine. Gly162 contributes to the 2-[(2R,5Z)-2-carboxy-4-methylthiazol-5(2H)-ylidene]ethyl phosphate binding site.

The protein belongs to the thiamine-phosphate synthase family. Mg(2+) serves as cofactor.

The catalysed reaction is 2-[(2R,5Z)-2-carboxy-4-methylthiazol-5(2H)-ylidene]ethyl phosphate + 4-amino-2-methyl-5-(diphosphooxymethyl)pyrimidine + 2 H(+) = thiamine phosphate + CO2 + diphosphate. It catalyses the reaction 2-(2-carboxy-4-methylthiazol-5-yl)ethyl phosphate + 4-amino-2-methyl-5-(diphosphooxymethyl)pyrimidine + 2 H(+) = thiamine phosphate + CO2 + diphosphate. It carries out the reaction 4-methyl-5-(2-phosphooxyethyl)-thiazole + 4-amino-2-methyl-5-(diphosphooxymethyl)pyrimidine + H(+) = thiamine phosphate + diphosphate. It functions in the pathway cofactor biosynthesis; thiamine diphosphate biosynthesis; thiamine phosphate from 4-amino-2-methyl-5-diphosphomethylpyrimidine and 4-methyl-5-(2-phosphoethyl)-thiazole: step 1/1. Its function is as follows. Condenses 4-methyl-5-(beta-hydroxyethyl)thiazole monophosphate (THZ-P) and 2-methyl-4-amino-5-hydroxymethyl pyrimidine pyrophosphate (HMP-PP) to form thiamine monophosphate (TMP). The protein is Thiamine-phosphate synthase of Pseudomonas putida (strain ATCC 47054 / DSM 6125 / CFBP 8728 / NCIMB 11950 / KT2440).